Here is a 494-residue protein sequence, read N- to C-terminus: DnaJ homolog subfamily C member 7 (494 aa).

Residue A2 is modified to N-acetylalanine. TPR repeat units lie at residues 28-61 (AETF…CPKN), 62-95 (ASYY…DDSF), 96-129 (VRGH…DHKN), 142-175 (VMEY…APAC), 177-209 (RFKI…DSTN), 210-243 (ADAL…APDH), 256-289 (LKAK…DPNN), 294-327 (AKLY…DDTY), and 328-361 (IKAY…EKTK). Positions 381–451 (DYYKILGVDK…KKKTRYDSGQ (71 aa)) constitute a J domain. S393 carries the phosphoserine modification.

In terms of assembly, associates with complexes containing chaperones HSP70 and HSP90. Interacts with the GAP domain of NF1. Interacts with HSP90AA1. Interacts with HSPA1A/B; the interaction is enhanced by ATP. Interacts with HSP90AB1. Interacts with PGR. Interacts with RAD9A; the interaction is interrupted by UV and heat shock treatments. Interacts with HUS1 and RAD1. Interacts with NR1I3. The DNAJC7-NR1I3 complex may also include HSP90. Interacts with HSPA8.

It is found in the cytoplasm. It localises to the nucleus. The protein resides in the cytoskeleton. Its function is as follows. Acts as a co-chaperone regulating the molecular chaperones HSP70 and HSP90 in folding of steroid receptors, such as the glucocorticoid receptor and the progesterone receptor. Proposed to act as a recycling chaperone by facilitating the return of chaperone substrates to early stages of chaperoning if further folding is required. In vitro, induces ATP-independent dissociation of HSP90 but not of HSP70 from the chaperone-substrate complexes. Recruits NR1I3 to the cytoplasm. The protein is DnaJ homolog subfamily C member 7 (DNAJC7) of Homo sapiens (Human).